Consider the following 146-residue polypeptide: Deoxyuridine 5'-triphosphate nucleotidohydrolase (146 aa).

Substrate is bound by residues 65–67, Asn78, and 82–84; these read RSG and TID.

Belongs to the dUTPase family. It depends on Mg(2+) as a cofactor.

It carries out the reaction dUTP + H2O = dUMP + diphosphate + H(+). It functions in the pathway pyrimidine metabolism; dUMP biosynthesis; dUMP from dCTP (dUTP route): step 2/2. In terms of biological role, this enzyme is involved in nucleotide metabolism: it produces dUMP, the immediate precursor of thymidine nucleotides and it decreases the intracellular concentration of dUTP so that uracil cannot be incorporated into DNA. In Treponema pallidum subsp. pallidum (strain SS14), this protein is Deoxyuridine 5'-triphosphate nucleotidohydrolase.